The primary structure comprises 662 residues: Glycogen debranching enzyme (662 aa).

Asp338 (nucleophile) is an active-site residue. Residue Glu373 is the Proton donor of the active site.

Belongs to the glycosyl hydrolase 13 family.

The enzyme catalyses Hydrolysis of (1-&gt;6)-alpha-D-glucosidic linkages to branches with degrees of polymerization of three or four glucose residues in limit dextrin.. It participates in glycan degradation; glycogen degradation. Functionally, removes maltotriose and maltotetraose chains that are attached by 1,6-alpha-linkage to the limit dextrin main chain, generating a debranched limit dextrin. The chain is Glycogen debranching enzyme from Yersinia pseudotuberculosis serotype O:1b (strain IP 31758).